We begin with the raw amino-acid sequence, 181 residues long: Probable nicotinate-nucleotide adenylyltransferase (181 aa).

The protein belongs to the NadD family.

It carries out the reaction nicotinate beta-D-ribonucleotide + ATP + H(+) = deamido-NAD(+) + diphosphate. It participates in cofactor biosynthesis; NAD(+) biosynthesis; deamido-NAD(+) from nicotinate D-ribonucleotide: step 1/1. Functionally, catalyzes the reversible adenylation of nicotinate mononucleotide (NaMN) to nicotinic acid adenine dinucleotide (NaAD). The polypeptide is Probable nicotinate-nucleotide adenylyltransferase (Campylobacter jejuni subsp. jejuni serotype O:23/36 (strain 81-176)).